We begin with the raw amino-acid sequence, 162 residues long: Photosystem II extrinsic protein V (162 aa).

Positions M1–A25 are cleaved as a signal peptide. Positions 62, 65, 66, and 117 each coordinate heme c.

Belongs to the cytochrome c family. PsbV subfamily. In terms of assembly, PSII is composed of 1 copy each of membrane proteins PsbA, PsbB, PsbC, PsbD, PsbE, PsbF, PsbH, PsbI, PsbJ, PsbK, PsbL, PsbM, PsbT, PsbX, PsbY, PsbZ, Psb30/Ycf12, peripheral proteins PsbO, CyanoQ (PsbQ), PsbU, PsbV and a large number of cofactors. It forms dimeric complexes. Requires heme c as cofactor.

The protein localises to the cellular thylakoid membrane. Its function is as follows. One of the extrinsic, lumenal subunits of photosystem II (PSII). PSII is a light-driven water plastoquinone oxidoreductase, using light energy to abstract electrons from H(2)O, generating a proton gradient subsequently used for ATP formation. The extrinsic proteins stabilize the structure of photosystem II oxygen-evolving complex (OEC), the ion environment of oxygen evolution and protect the OEC against heat-induced inactivation. Low-potential cytochrome c that plays a role in the OEC of PSII. The polypeptide is Photosystem II extrinsic protein V (Cyanothece sp. (strain PCC 7425 / ATCC 29141)).